The following is a 256-amino-acid chain: 5-keto-4-deoxy-D-glucarate aldolase (256 aa).

Histidine 50 serves as the catalytic Proton acceptor. Glutamine 151 contributes to the substrate binding site. Residue glutamate 153 coordinates Mg(2+). 2 residues coordinate substrate: serine 178 and aspartate 179. Aspartate 179 contacts Mg(2+).

Belongs to the HpcH/HpaI aldolase family. KDGluc aldolase subfamily. In terms of assembly, homohexamer; trimer of dimers. Mg(2+) is required as a cofactor.

The catalysed reaction is 5-dehydro-4-deoxy-D-glucarate = 2-hydroxy-3-oxopropanoate + pyruvate. It catalyses the reaction 2-dehydro-3-deoxy-D-glucarate = 2-hydroxy-3-oxopropanoate + pyruvate. The protein operates within carbohydrate acid metabolism; galactarate degradation; D-glycerate from galactarate: step 2/3. In terms of biological role, catalyzes the reversible retro-aldol cleavage of both 5-keto-4-deoxy-D-glucarate and 2-keto-3-deoxy-D-glucarate to pyruvate and tartronic semialdehyde. This Escherichia coli O157:H7 (strain EC4115 / EHEC) protein is 5-keto-4-deoxy-D-glucarate aldolase.